A 178-amino-acid polypeptide reads, in one-letter code: ATP synthase subunit delta (178 aa).

It belongs to the ATPase delta chain family. F-type ATPases have 2 components, F(1) - the catalytic core - and F(0) - the membrane proton channel. F(1) has five subunits: alpha(3), beta(3), gamma(1), delta(1), epsilon(1). F(0) has three main subunits: a(1), b(2) and c(10-14). The alpha and beta chains form an alternating ring which encloses part of the gamma chain. F(1) is attached to F(0) by a central stalk formed by the gamma and epsilon chains, while a peripheral stalk is formed by the delta and b chains.

It localises to the cell inner membrane. Its function is as follows. F(1)F(0) ATP synthase produces ATP from ADP in the presence of a proton or sodium gradient. F-type ATPases consist of two structural domains, F(1) containing the extramembraneous catalytic core and F(0) containing the membrane proton channel, linked together by a central stalk and a peripheral stalk. During catalysis, ATP synthesis in the catalytic domain of F(1) is coupled via a rotary mechanism of the central stalk subunits to proton translocation. In terms of biological role, this protein is part of the stalk that links CF(0) to CF(1). It either transmits conformational changes from CF(0) to CF(1) or is implicated in proton conduction. In Thioalkalivibrio sulfidiphilus (strain HL-EbGR7), this protein is ATP synthase subunit delta.